We begin with the raw amino-acid sequence, 348 residues long: Phenylalanine--tRNA ligase alpha subunit (348 aa).

Mg(2+) is bound at residue Glu259.

The protein belongs to the class-II aminoacyl-tRNA synthetase family. Phe-tRNA synthetase alpha subunit type 1 subfamily. In terms of assembly, tetramer of two alpha and two beta subunits. Requires Mg(2+) as cofactor.

The protein localises to the cytoplasm. The enzyme catalyses tRNA(Phe) + L-phenylalanine + ATP = L-phenylalanyl-tRNA(Phe) + AMP + diphosphate + H(+). The sequence is that of Phenylalanine--tRNA ligase alpha subunit from Latilactobacillus sakei subsp. sakei (strain 23K) (Lactobacillus sakei subsp. sakei).